Reading from the N-terminus, the 421-residue chain is GTPase Obg (421 aa).

The Obg domain occupies 1–158 (MFIDVAKIEL…KTIKLELKLL (158 aa)). The interval 21 to 40 (AFRREKYEPSGGPAGGDGGD) is disordered. In terms of domain architecture, OBG-type G spans 159 to 328 (ADVGLIGLPN…LMYLIADTLD (170 aa)). GTP-binding positions include 165–172 (GLPNVGKS), 190–194 (FTTLE), 211–214 (DIPG), 281–284 (NKTD), and 309–311 (SAA). The Mg(2+) site is built by serine 172 and threonine 192. The 78-residue stretch at 344 to 421 (FEEEKEPDFK…IGDVEFDFYE (78 aa)) folds into the OCT domain.

The protein belongs to the TRAFAC class OBG-HflX-like GTPase superfamily. OBG GTPase family. Monomer. It depends on Mg(2+) as a cofactor.

Its subcellular location is the cytoplasm. In terms of biological role, an essential GTPase which binds GTP, GDP and possibly (p)ppGpp with moderate affinity, with high nucleotide exchange rates and a fairly low GTP hydrolysis rate. Plays a role in control of the cell cycle, stress response, ribosome biogenesis and in those bacteria that undergo differentiation, in morphogenesis control. In Finegoldia magna (strain ATCC 29328 / DSM 20472 / WAL 2508) (Peptostreptococcus magnus), this protein is GTPase Obg.